Consider the following 189-residue polypeptide: Potassium-transporting ATPase KdpC subunit (189 aa).

The helical transmembrane segment at 6–26 threads the bilayer; it reads PAIMMVLVFTIICGGIYPAVV.

Belongs to the KdpC family. As to quaternary structure, the system is composed of three essential subunits: KdpA, KdpB and KdpC.

Its subcellular location is the cell inner membrane. In terms of biological role, part of the high-affinity ATP-driven potassium transport (or Kdp) system, which catalyzes the hydrolysis of ATP coupled with the electrogenic transport of potassium into the cytoplasm. This subunit acts as a catalytic chaperone that increases the ATP-binding affinity of the ATP-hydrolyzing subunit KdpB by the formation of a transient KdpB/KdpC/ATP ternary complex. This chain is Potassium-transporting ATPase KdpC subunit, found in Geobacter metallireducens (strain ATCC 53774 / DSM 7210 / GS-15).